The primary structure comprises 526 residues: Fumitremorgin C synthase (526 aa).

Residues 4-24 (LPLSPAVLFLIIVLPILYLWI) traverse the membrane as a helical segment. Position 443 (Cys-443) interacts with heme.

It belongs to the cytochrome P450 family. Heme serves as cofactor.

The protein resides in the membrane. The enzyme catalyses tryprostatin A + reduced [NADPH--hemoprotein reductase] + O2 = fumitremorgin C + oxidized [NADPH--hemoprotein reductase] + 2 H2O + H(+). It functions in the pathway mycotoxin biosynthesis. Cytochrome P450 monooxygenase; part of the gene cluster that mediates the biosynthesis of fumitremorgins, indole alkaloids that carry not only intriguing chemical structures, but also interesting biological and pharmacological activities. The biosynthesis of fumitremorgin-type alkaloids begins by condensation of the two amino acids L-tryptophan and L-proline to brevianamide F, catalyzed by the non-ribosomal peptide synthetase ftmA. Brevianamide F is then prenylated by the prenyltransferase ftmPT1/ftmB in the presence of dimethylallyl diphosphate, resulting in the formation of tryprostatin B. The three cytochrome P450 monooxygenases, ftmP450-1/ftmC, ftmP450-2/ftmE and ftmP450-3/FtmG, are responsible for the conversion of tryprostatin B to 6-hydroxytryprostatin B, tryprostatin A to fumitremorgin C and fumitremorgin C to 12,13-dihydroxyfumitremorgin C, respectively. The putative methyltransferase ftmMT/ftmD is expected for the conversion of 6-hydroxytryprostatin B to tryprostatin A. FtmPT2/FtmH catalyzes the prenylation of 12,13-dihydroxyfumitre-morgin C in the presence of dimethylallyl diphosphate, resulting in the formation of fumitremorgin B. Fumitremorgin B is further converted to verruculogen by ftmOx1/ftmF via the insertion of an endoperoxide bond between the two prenyl moieties. In some fungal species, verruculogen is further converted to fumitremorgin A, but the enzymes involved in this step have not been identified yet. The chain is Fumitremorgin C synthase from Aspergillus fumigatus (Neosartorya fumigata).